A 779-amino-acid polypeptide reads, in one-letter code: Serine/threonine-protein kinase SIK1 (779 aa).

Residues 27–278 (YDVERTLGKG…IAQIRQHRWM (252 aa)) enclose the Protein kinase domain. ATP-binding positions include 33 to 41 (LGKGNFAVV) and K56. Catalysis depends on D149, which acts as the Proton acceptor. The residue at position 182 (T182) is a Phosphothreonine; by LKB1 and GSK3-beta. S186 carries the phosphoserine; by autocatalysis modification. One can recognise a UBA domain in the interval 303 to 343 (DYNEQVLGIMQALGIDRQRTIESLQNSSYNHFAAIYYLLLE). T322 bears the Phosphothreonine; by CaMK1 mark. Disordered regions lie at residues 350–375 (SAQP…LSSL) and 449–472 (EARQ…STGR). A compositionally biased stretch (polar residues) spans 363-373 (RQPQLRSSDLS). At S577 the chain carries Phosphoserine; by PKA. The interval 586–612 (KAFRQQLRKNARTKGFLGLNKIKGLAR) is RK-rich region. The segment at 621–641 (TPRGGMSTFHTPAPSSGLQGC) is disordered. Positions 628–641 (TFHTPAPSSGLQGC) are enriched in polar residues.

It belongs to the protein kinase superfamily. CAMK Ser/Thr protein kinase family. AMPK subfamily. In terms of assembly, interacts (when phosphorylated on Thr-182 and Ser-186) with YWHAZ. Interacts with ATP1A1. The cofactor is Mg(2+). Post-translationally, phosphorylated at Thr-182 by STK11/LKB1 in complex with STE20-related adapter-alpha (STRADA) pseudo kinase and CAB39, leading to its activation. Phosphorylation at Thr-182 promotes autophosphorylation at Ser-186, which is required for sustained activity. Autophosphorylation at Ser-186 is maintained by sequential phosphorylation at Thr-182 by GSK3-beta. GSK3-beta cannot initiate phosphorylation at Thr-182, it can only maintain it. Phosphorylation at Ser-577 by PKA promotes translocation to the cytoplasm. Phosphorylation at Thr-322 by CaMK1 following intracellular sodium concentration leads to activation. As to expression, expressed in lung, skin, ovary, heart and stomach. No expression in brain, liver or adult skeletal muscle but is present in skeletal muscle progenitor cells of the somite beginning at 9.5 dpc. Present at 8.0 dpc in the monolayer of presumptive myocardial cells but rapidly down-regulated at 8.5 dpc upon primitive ventricle formation, although still present in myocardial cells that will populate the primitive atrium and bulbus cordis. At 9.5 dpc expression is down-regulated in the primitive atrium but observed in the sinus venosus and truncus arteriosus.

The protein resides in the cytoplasm. Its subcellular location is the nucleus. The enzyme catalyses L-seryl-[protein] + ATP = O-phospho-L-seryl-[protein] + ADP + H(+). It catalyses the reaction L-threonyl-[protein] + ATP = O-phospho-L-threonyl-[protein] + ADP + H(+). Its activity is regulated as follows. Activated by phosphorylation on Thr-182. Also activated by phosphorylation on Thr-322 in response to increases in intracellular sodium in parallel with elevations in intracellular calcium through the reversible sodium/calcium exchanger. Serine/threonine-protein kinase involved in various processes such as cell cycle regulation, gluconeogenesis and lipogenesis regulation, muscle growth and differentiation and tumor suppression. Phosphorylates HDAC4, HDAC5, PPME1, SREBF1, CRTC1/TORC1 and CRTC2/TORC2. Acts as a tumor suppressor and plays a key role in p53/TP53-dependent anoikis, a type of apoptosis triggered by cell detachment: required for phosphorylation of p53/TP53 in response to loss of adhesion and is able to suppress metastasis. Part of a sodium-sensing signaling network, probably by mediating phosphorylation of PPME1: following increases in intracellular sodium, SIK1 is activated by CaMK1 and phosphorylates PPME1 subunit of protein phosphatase 2A (PP2A), leading to dephosphorylation of sodium/potassium-transporting ATPase ATP1A1 and subsequent increase activity of ATP1A1. Acts as a regulator of muscle cells by phosphorylating and inhibiting class II histone deacetylases HDAC4 and HDAC5, leading to promote expression of MEF2 target genes in myocytes. Also required during cardiomyogenesis by regulating the exit of cardiomyoblasts from the cell cycle via down-regulation of CDKN1C/p57Kip2. Acts as a regulator of hepatic gluconeogenesis by phosphorylating and repressing the CREB-specific coactivators CRTC1/TORC1 and CRTC2/TORC2, leading to inhibit CREB activity. Also regulates hepatic lipogenesis by phosphorylating and inhibiting SREBF1. In concert with CRTC1/TORC1, regulates the light-induced entrainment of the circadian clock by attenuating PER1 induction; represses CREB-mediated transcription of PER1 by phosphorylating and deactivating CRTC1/TORC1. The protein is Serine/threonine-protein kinase SIK1 (Sik1) of Mus musculus (Mouse).